The following is a 257-amino-acid chain: Succinate dehydrogenase subunit 5, mitochondrial (257 aa).

Residues 1-89 (MGTLGRAIHT…AMGMGQVRRF (89 aa)) constitute a mitochondrion transit peptide.

Component of complex II composed of eight subunits in plants: four classical SDH subunits SDH1, SDH2, SDH3 and SDH4 (a flavoprotein (FP), an iron-sulfur protein (IP), and a cytochrome b composed of a large and a small subunit.), as well as four subunits unknown in mitochondria from bacteria and heterotrophic eukaryotes.

Its subcellular location is the mitochondrion inner membrane. Its pathway is carbohydrate metabolism; tricarboxylic acid cycle. The sequence is that of Succinate dehydrogenase subunit 5, mitochondrial from Arabidopsis thaliana (Mouse-ear cress).